The sequence spans 358 residues: Peptide chain release factor 1 (358 aa).

Q235 carries the post-translational modification N5-methylglutamine.

This sequence belongs to the prokaryotic/mitochondrial release factor family. Methylated by PrmC. Methylation increases the termination efficiency of RF1.

The protein localises to the cytoplasm. Peptide chain release factor 1 directs the termination of translation in response to the peptide chain termination codons UAG and UAA. The protein is Peptide chain release factor 1 of Neisseria meningitidis serogroup C (strain 053442).